We begin with the raw amino-acid sequence, 266 residues long: MRKNTYAMRYVAGQPAERILPPGSFASIGQALPAGEPLSSEERIRILVWNIFKQQRAEWLSVLKNYGKDAHLVLLQEAQTTPELVQFATANYLAADQVPAFVLPQHPSGVMTLSAAHPVYCCPLREREPILRLAKSALVTVYPLPDTRLLMVVNVHAVNFSLGVDVYSKQLLPIGDQIAHHSGPVIMAGDFNAWSRPRMNALYRFAREMSLRQVRFTDDQRRRAFGRPLDFVFYRGLNVNEASVLVTRASDHNPLLVEFSPGKPEQ.

It belongs to the UPF0294 family.

The protein localises to the cytoplasm. The sequence is that of UPF0294 protein YafD from Salmonella agona (strain SL483).